The following is a 387-amino-acid chain: Ferrochelatase (387 aa).

Fe cation is bound by residues His-196 and Glu-277.

It belongs to the ferrochelatase family.

It localises to the cytoplasm. The catalysed reaction is heme b + 2 H(+) = protoporphyrin IX + Fe(2+). Its pathway is porphyrin-containing compound metabolism; protoheme biosynthesis; protoheme from protoporphyrin-IX: step 1/1. Its function is as follows. Catalyzes the ferrous insertion into protoporphyrin IX. This Synechococcus elongatus (strain ATCC 33912 / PCC 7942 / FACHB-805) (Anacystis nidulans R2) protein is Ferrochelatase.